A 337-amino-acid polypeptide reads, in one-letter code: 3-isopropylmalate dehydrogenase (337 aa).

Residues Arg88, Arg98, Arg122, and Asp212 each contribute to the substrate site. Positions 212, 236, and 240 each coordinate Mg(2+). An NAD(+)-binding site is contributed by 272-284 (GSAPDIAGKGIAD).

The protein belongs to the isocitrate and isopropylmalate dehydrogenases family. LeuB type 2 subfamily. As to quaternary structure, homodimer. Mg(2+) is required as a cofactor. The cofactor is Mn(2+).

The protein localises to the cytoplasm. It carries out the reaction (2R,3S)-3-isopropylmalate + NAD(+) = 4-methyl-2-oxopentanoate + CO2 + NADH. Its pathway is amino-acid biosynthesis; L-leucine biosynthesis; L-leucine from 3-methyl-2-oxobutanoate: step 3/4. Its function is as follows. Catalyzes the oxidation of 3-carboxy-2-hydroxy-4-methylpentanoate (3-isopropylmalate) to 3-carboxy-4-methyl-2-oxopentanoate. The product decarboxylates to 4-methyl-2 oxopentanoate. The sequence is that of 3-isopropylmalate dehydrogenase from Rhodococcus erythropolis (strain PR4 / NBRC 100887).